The following is a 293-amino-acid chain: Ribosomal protein L11 methyltransferase (293 aa).

Thr145, Gly166, Asp188, and Asn230 together coordinate S-adenosyl-L-methionine.

This sequence belongs to the methyltransferase superfamily. PrmA family.

The protein localises to the cytoplasm. The catalysed reaction is L-lysyl-[protein] + 3 S-adenosyl-L-methionine = N(6),N(6),N(6)-trimethyl-L-lysyl-[protein] + 3 S-adenosyl-L-homocysteine + 3 H(+). In terms of biological role, methylates ribosomal protein L11. This chain is Ribosomal protein L11 methyltransferase, found in Salmonella dublin (strain CT_02021853).